Here is a 472-residue protein sequence, read N- to C-terminus: Exodeoxyribonuclease 7 large subunit (472 aa).

Belongs to the XseA family. In terms of assembly, heterooligomer composed of large and small subunits.

It localises to the cytoplasm. The catalysed reaction is Exonucleolytic cleavage in either 5'- to 3'- or 3'- to 5'-direction to yield nucleoside 5'-phosphates.. In terms of biological role, bidirectionally degrades single-stranded DNA into large acid-insoluble oligonucleotides, which are then degraded further into small acid-soluble oligonucleotides. In Carboxydothermus hydrogenoformans (strain ATCC BAA-161 / DSM 6008 / Z-2901), this protein is Exodeoxyribonuclease 7 large subunit.